The primary structure comprises 84 residues: Large ribosomal subunit protein bL27 (84 aa).

A disordered region spans residues methionine 1–glycine 22.

The protein belongs to the bacterial ribosomal protein bL27 family.

This chain is Large ribosomal subunit protein bL27, found in Shewanella oneidensis (strain ATCC 700550 / JCM 31522 / CIP 106686 / LMG 19005 / NCIMB 14063 / MR-1).